The following is a 458-amino-acid chain: Phosphoglucosamine mutase (458 aa).

Ser-106 (phosphoserine intermediate) is an active-site residue. Residues Ser-106, Asp-247, Asp-249, and Asp-251 each coordinate Mg(2+). At Ser-106 the chain carries Phosphoserine.

The protein belongs to the phosphohexose mutase family. The cofactor is Mg(2+). Activated by phosphorylation.

It catalyses the reaction alpha-D-glucosamine 1-phosphate = D-glucosamine 6-phosphate. Functionally, catalyzes the conversion of glucosamine-6-phosphate to glucosamine-1-phosphate. This is Phosphoglucosamine mutase from Chlamydia pneumoniae (Chlamydophila pneumoniae).